We begin with the raw amino-acid sequence, 572 residues long: Phosphoenolpyruvate-protein phosphotransferase (572 aa).

The active-site Tele-phosphohistidine intermediate is the H190. The phosphoenolpyruvate site is built by R297 and R333. Positions 432 and 456 each coordinate Mg(2+). Residues 455-456 (ND) and R466 contribute to the phosphoenolpyruvate site. The Proton donor role is filled by C503.

The protein belongs to the PEP-utilizing enzyme family. As to quaternary structure, homodimer. Requires Mg(2+) as cofactor.

It localises to the cytoplasm. The catalysed reaction is L-histidyl-[protein] + phosphoenolpyruvate = N(pros)-phospho-L-histidyl-[protein] + pyruvate. In terms of biological role, general (non sugar-specific) component of the phosphoenolpyruvate-dependent sugar phosphotransferase system (sugar PTS). This major carbohydrate active-transport system catalyzes the phosphorylation of incoming sugar substrates concomitantly with their translocation across the cell membrane. Enzyme I transfers the phosphoryl group from phosphoenolpyruvate (PEP) to the phosphoryl carrier protein (HPr). The protein is Phosphoenolpyruvate-protein phosphotransferase (ptsI) of Listeria innocua serovar 6a (strain ATCC BAA-680 / CLIP 11262).